The chain runs to 340 residues: Uroporphyrinogen decarboxylase (340 aa).

Residues 21–25, F40, D71, Y146, S201, and H316 each bind substrate; that span reads RQAGR.

Belongs to the uroporphyrinogen decarboxylase family. As to quaternary structure, homodimer.

The protein localises to the cytoplasm. It carries out the reaction uroporphyrinogen III + 4 H(+) = coproporphyrinogen III + 4 CO2. It functions in the pathway porphyrin-containing compound metabolism; protoporphyrin-IX biosynthesis; coproporphyrinogen-III from 5-aminolevulinate: step 4/4. Its function is as follows. Catalyzes the decarboxylation of four acetate groups of uroporphyrinogen-III to yield coproporphyrinogen-III. The chain is Uroporphyrinogen decarboxylase from Rickettsia bellii (strain RML369-C).